Consider the following 490-residue polypeptide: Cardiolipin synthase 1 (490 aa).

2 helical membrane passes run 9–29 and 42–62; these read ILTI…FVII and WAWL…YLFL. 2 PLD phosphodiesterase domains span residues 225–252 and 403–430; these read MNNR…GDDY and QNGF…DFRS. Residues histidine 230, lysine 232, aspartate 237, histidine 408, lysine 410, and aspartate 415 contribute to the active site.

This sequence belongs to the phospholipase D family. Cardiolipin synthase subfamily.

It is found in the cell membrane. It catalyses the reaction 2 a 1,2-diacyl-sn-glycero-3-phospho-(1'-sn-glycerol) = a cardiolipin + glycerol. Its function is as follows. Catalyzes the reversible phosphatidyl group transfer from one phosphatidylglycerol molecule to another to form cardiolipin (CL) (diphosphatidylglycerol) and glycerol. In Staphylococcus epidermidis (strain ATCC 35984 / DSM 28319 / BCRC 17069 / CCUG 31568 / BM 3577 / RP62A), this protein is Cardiolipin synthase 1 (cls1).